The primary structure comprises 531 residues: Polyamine aminopropyltransferase 1 (531 aa).

The next 7 membrane-spanning stretches (helical) occupy residues 27–47, 59–79, 96–116, 122–142, 160–180, 188–208, and 218–238; these read FLLL…ELAL, VLQT…GSLA, GVLA…FAWL, AMIV…PLLM, MFAV…LFLL, GALV…VFIF, and AGLL…YVLA. A spermidine synthase region spans residues 205–476; that stretch reads VFIFRRQTGR…VLARPGTEAP (272 aa). A PABS domain is found at 233-471; the sequence is TTYVLADDLE…GNWGFVLARP (239 aa). Gln263 is a binding site for S-methyl-5'-thioadenosine. Residues His298 and Asp320 each contribute to the spermidine site. S-methyl-5'-thioadenosine is bound by residues Glu340 and 374 to 375; that span reads DA. Asp392 functions as the Proton acceptor in the catalytic mechanism.

Belongs to the spermidine/spermine synthase family. In terms of assembly, homodimer or homotetramer.

It is found in the cell membrane. The catalysed reaction is S-adenosyl 3-(methylsulfanyl)propylamine + putrescine = S-methyl-5'-thioadenosine + spermidine + H(+). It participates in amine and polyamine biosynthesis; spermidine biosynthesis; spermidine from putrescine: step 1/1. Catalyzes the irreversible transfer of a propylamine group from the amino donor S-adenosylmethioninamine (decarboxy-AdoMet) to putrescine (1,4-diaminobutane) to yield spermidine. The chain is Polyamine aminopropyltransferase 1 from Streptomyces coelicolor (strain ATCC BAA-471 / A3(2) / M145).